The sequence spans 440 residues: GTPase Obg (440 aa).

An Obg domain is found at 5-163 (STFVDQTKIE…RTLRLELKVL (159 aa)). One can recognise an OBG-type G domain in the interval 164-338 (ADVGLVGFPS…LMSRAADLVS (175 aa)). Residues 170 to 177 (GFPSVGKS), 195 to 199 (FTTLK), 217 to 220 (DLPG), 288 to 291 (SQMD), and 319 to 321 (SSV) contribute to the GTP site. Residues serine 177 and threonine 197 each coordinate Mg(2+). Residues 362-440 (YHRPEKMEFT…IGDFSFEFVQ (79 aa)) enclose the OCT domain.

It belongs to the TRAFAC class OBG-HflX-like GTPase superfamily. OBG GTPase family. As to quaternary structure, monomer. It depends on Mg(2+) as a cofactor.

Its subcellular location is the cytoplasm. Its function is as follows. An essential GTPase which binds GTP, GDP and possibly (p)ppGpp with moderate affinity, with high nucleotide exchange rates and a fairly low GTP hydrolysis rate. Plays a role in control of the cell cycle, stress response, ribosome biogenesis and in those bacteria that undergo differentiation, in morphogenesis control. This is GTPase Obg from Lactobacillus delbrueckii subsp. bulgaricus (strain ATCC 11842 / DSM 20081 / BCRC 10696 / JCM 1002 / NBRC 13953 / NCIMB 11778 / NCTC 12712 / WDCM 00102 / Lb 14).